Here is a 525-residue protein sequence, read N- to C-terminus: uncharacterized protein (525 aa).

S55 is subject to Phosphoserine. Transmembrane regions (helical) follow at residues 81–101, 120–140, 147–167, 173–193, 208–228, 238–258, 295–315, 318–338, 350–370, 388–408, 413–433, 454–474, and 484–504; these read AYIV…PNFY, LLGQ…LGPL, KLVY…CALA, LVIS…NVAG, MYMF…GTGV, WLYW…VFTP, FVFF…SLGI, GFVN…YFSI, YMAA…QCWL, FIMT…FAFC, IHYI…YHIW, AFEL…ALMF, and AVVG…YFYG.

This sequence belongs to the major facilitator superfamily. CAR1 family.

It localises to the membrane. This is an uncharacterized protein from Schizosaccharomyces pombe (strain 972 / ATCC 24843) (Fission yeast).